Here is a 210-residue protein sequence, read N- to C-terminus: MNKGVFVVIEGVDGAGKTALIEGFKKLYPTKFLNYQLTYTREPGGTLLAEKIRQLLLNETMEPLTEAYLFAAARTEHISKLIKPAIEKEQLVISDRFVFSSFAYQGLSKKIGIDTVKQINHHALRNMMPNFTFILDCNFKEALQRMQKRGNDNLLDEFIKGKNDFDTVRSYYLSLVDKKNCFLINGDNKQEHLEKFIELLTRCLQQPTHY.

11–18 (GVDGAGKT) is an ATP binding site.

This sequence belongs to the thymidylate kinase family.

The catalysed reaction is dTMP + ATP = dTDP + ADP. Functionally, phosphorylation of dTMP to form dTDP in both de novo and salvage pathways of dTTP synthesis. This Mycoplasma genitalium (strain ATCC 33530 / DSM 19775 / NCTC 10195 / G37) (Mycoplasmoides genitalium) protein is Thymidylate kinase (tmk).